Reading from the N-terminus, the 239-residue chain is Vesicle-associated protein 1-2 (239 aa).

Methionine 1 bears the N-acetylmethionine mark. Over 1 to 215 the chain is Cytoplasmic; that stretch reads MSNELLTIDP…RRESKRSKSG (215 aa). N-acetylserine; in Vesicle-associated protein 1-2, N-terminally processed is present on serine 2. An MSP domain is found at 5–125; sequence LLTIDPVDLQ…EETKLRVVYV (121 aa). The disordered stretch occupies residues 123 to 174; sequence VYVAPPRPPSPVREGSEEGSSPRASVSDNGNASDFTAAPRFSADRVDAQDNS. Serine 132 is modified (phosphoserine). The span at 140–156 shows a compositional bias: polar residues; it reads EGSSPRASVSDNGNASD. At serine 164 the chain carries Phosphoserine. The stretch at 169–215 forms a coiled coil; the sequence is DAQDNSSEARALVTKLTEEKNSAVQLNNRLQQELDQLRRESKRSKSG. A helical; Anchor for type IV membrane protein transmembrane segment spans residues 216-236; that stretch reads GIPFMYVLLVGLIGLILGYIM.

It belongs to the VAMP-associated protein (VAP) (TC 9.B.17) family. Interacts with ORP3A. Binds to VLG at the endomembrane system.

The protein resides in the endoplasmic reticulum membrane. Vesicle-associated protein that binds the oxysterol-binding protein ORP3A and allows its targeting to the ER. This Arabidopsis thaliana (Mouse-ear cress) protein is Vesicle-associated protein 1-2.